Consider the following 791-residue polypeptide: Probable phosphoketolase (791 aa).

Belongs to the XFP family. Requires thiamine diphosphate as cofactor.

The protein is Probable phosphoketolase of Chlorobaculum tepidum (strain ATCC 49652 / DSM 12025 / NBRC 103806 / TLS) (Chlorobium tepidum).